Reading from the N-terminus, the 199-residue chain is 5'-deoxynucleotidase YfbR (199 aa).

Substrate contacts are provided by residues 18–19 (RW) and histidine 33. Positions 30–142 (VSEHSLQVAM…VKQADALCAY (113 aa)) constitute an HD domain. Residues histidine 33, histidine 68, and aspartate 69 each contribute to the a divalent metal cation site. Residues aspartate 69, 77–80 (DLPT), and aspartate 137 contribute to the substrate site. A divalent metal cation is bound at residue aspartate 137.

The protein belongs to the 5DNU family. As to quaternary structure, homodimer. A divalent metal cation is required as a cofactor.

It is found in the cytoplasm. It catalyses the reaction a 2'-deoxyribonucleoside 5'-phosphate + H2O = a 2'-deoxyribonucleoside + phosphate. Its function is as follows. Catalyzes the strictly specific dephosphorylation of 2'-deoxyribonucleoside 5'-monophosphates. The chain is 5'-deoxynucleotidase YfbR from Shigella boydii serotype 18 (strain CDC 3083-94 / BS512).